The following is a 245-amino-acid chain: Small ribosomal subunit protein uS3 (245 aa).

Residues 39–107 (IRKAIREKLK…EVRVNLVEIR (69 aa)) form the KH type-2 domain. The segment at 216-245 (DKRLETSGQSRARANTNQRGPASGAQAAGA) is disordered. A compositionally biased stretch (polar residues) spans 221–235 (TSGQSRARANTNQRG).

It belongs to the universal ribosomal protein uS3 family. As to quaternary structure, part of the 30S ribosomal subunit. Forms a tight complex with proteins S10 and S14.

Its function is as follows. Binds the lower part of the 30S subunit head. Binds mRNA in the 70S ribosome, positioning it for translation. The sequence is that of Small ribosomal subunit protein uS3 from Hyphomonas neptunium (strain ATCC 15444).